Here is a 165-residue protein sequence, read N- to C-terminus: Transcriptional regulator MraZ (165 aa).

SpoVT-AbrB domains are found at residues 5-51 and 80-123; these read TYEG…GEEL and SAEL…NPER.

The protein belongs to the MraZ family. As to quaternary structure, forms oligomers.

Its subcellular location is the cytoplasm. It is found in the nucleoid. The polypeptide is Transcriptional regulator MraZ (Hyphomonas neptunium (strain ATCC 15444)).